The chain runs to 276 residues: Undecaprenyl-diphosphatase (276 aa).

5 helical membrane passes run 85–105 (MNVV…EKTI), 108–128 (VLFA…AILW), 187–207 (VATE…TLYE), 217–237 (VDSV…AFAC), and 253–273 (FAWY…SGWI).

The protein belongs to the UppP family.

It localises to the cell inner membrane. The enzyme catalyses di-trans,octa-cis-undecaprenyl diphosphate + H2O = di-trans,octa-cis-undecaprenyl phosphate + phosphate + H(+). Catalyzes the dephosphorylation of undecaprenyl diphosphate (UPP). Confers resistance to bacitracin. This is Undecaprenyl-diphosphatase from Burkholderia mallei (strain NCTC 10247).